A 451-amino-acid chain; its full sequence is Trigger factor (451 aa).

Positions 165 to 250 (DDKLTIDFEG…LRQIQVREAL (86 aa)) constitute a PPIase FKBP-type domain.

It belongs to the FKBP-type PPIase family. Tig subfamily.

Its subcellular location is the cytoplasm. It carries out the reaction [protein]-peptidylproline (omega=180) = [protein]-peptidylproline (omega=0). Involved in protein export. Acts as a chaperone by maintaining the newly synthesized protein in an open conformation. Functions as a peptidyl-prolyl cis-trans isomerase. This chain is Trigger factor (tig), found in Helicobacter pylori (strain J99 / ATCC 700824) (Campylobacter pylori J99).